Consider the following 223-residue polypeptide: Deoxyribose-phosphate aldolase (223 aa).

The active-site Proton donor/acceptor is Asp-91. The Schiff-base intermediate with acetaldehyde role is filled by Lys-153. Lys-182 acts as the Proton donor/acceptor in catalysis.

The protein belongs to the DeoC/FbaB aldolase family. DeoC type 1 subfamily.

The protein localises to the cytoplasm. It catalyses the reaction 2-deoxy-D-ribose 5-phosphate = D-glyceraldehyde 3-phosphate + acetaldehyde. It functions in the pathway carbohydrate degradation; 2-deoxy-D-ribose 1-phosphate degradation; D-glyceraldehyde 3-phosphate and acetaldehyde from 2-deoxy-alpha-D-ribose 1-phosphate: step 2/2. Its function is as follows. Catalyzes a reversible aldol reaction between acetaldehyde and D-glyceraldehyde 3-phosphate to generate 2-deoxy-D-ribose 5-phosphate. The chain is Deoxyribose-phosphate aldolase from Streptococcus pyogenes serotype M1.